Reading from the N-terminus, the 100-residue chain is Integration host factor subunit alpha (100 aa).

The interval 53 to 72 (FDLRDKRQRPGRNPKTGEEI) is disordered.

This sequence belongs to the bacterial histone-like protein family. Heterodimer of an alpha and a beta chain.

This protein is one of the two subunits of integration host factor, a specific DNA-binding protein that functions in genetic recombination as well as in transcriptional and translational control. This Stutzerimonas stutzeri (strain A1501) (Pseudomonas stutzeri) protein is Integration host factor subunit alpha.